The sequence spans 254 residues: Geranylgeranylglyceryl phosphate synthase (254 aa).

Residues Asp-28 and Ser-57 each contribute to the Mg(2+) site. Sn-glycerol 1-phosphate-binding positions include 176 to 182 (YLEAGSG), 207 to 208 (GG), and 229 to 230 (GT).

This sequence belongs to the GGGP/HepGP synthase family. Group II subfamily. Mg(2+) serves as cofactor.

It is found in the cytoplasm. It catalyses the reaction sn-glycerol 1-phosphate + (2E,6E,10E)-geranylgeranyl diphosphate = sn-3-O-(geranylgeranyl)glycerol 1-phosphate + diphosphate. The protein operates within membrane lipid metabolism; glycerophospholipid metabolism. Functionally, prenyltransferase that catalyzes the transfer of the geranylgeranyl moiety of geranylgeranyl diphosphate (GGPP) to the C3 hydroxyl of sn-glycerol-1-phosphate (G1P). This reaction is the first ether-bond-formation step in the biosynthesis of archaeal membrane lipids. The sequence is that of Geranylgeranylglyceryl phosphate synthase from Pyrococcus horikoshii (strain ATCC 700860 / DSM 12428 / JCM 9974 / NBRC 100139 / OT-3).